The chain runs to 431 residues: ABSCISIC ACID-INSENSITIVE 5-like protein 7 (431 aa).

The segment at 1-29 (MGTHINFNNLGGGGHPGGEGSSNQMKPTG) is disordered. Positions 10 to 20 (LGGGGHPGGEG) are enriched in gly residues. Phosphoserine is present on residues Ser-39 and Ser-61. The residue at position 110 (Ser-110) is a Phosphoserine; by CPK32. Residues 133 to 153 (DGNMEGSSGGGGESNVPPGRQ) form a disordered region. The residue at position 155 (Thr-155) is a Phosphothreonine. The segment covering 319–331 (SPGTSSAENNSLS) has biased composition (polar residues). Residues 319-338 (SPGTSSAENNSLSPVPYVLN) are disordered. A Nuclear localization signal motif is present at residues 340–347 (GRRSNTGL). A bZIP domain is found at 351–414 (IERRQRRMIK…KNELKETSKR (64 aa)). Residues 353–372 (RRQRRMIKNRESAARSRARK) form a basic motif region. Residues 372–411 (KQAYTLELEAEIEKLKKTNQELQKKQAEMVEMQKNELKET) are a coiled coil. Residues 379 to 393 (LEAEIEKLKKTNQEL) are leucine-zipper.

Belongs to the bZIP family. ABI5 subfamily. In terms of assembly, DNA-binding heterodimer. Interacts with CPK32 and the AFP proteins AFP1, AFP2 and AFP3. Interacts with FREE1 (via C-terminus). Post-translationally, phosphorylated by CPK4 and CPK11 in vitro. Expressed in roots, leaves, flowers and immatures siliques.

Its subcellular location is the nucleus. Its function is as follows. Functions as a transcriptional activator in the ABA-inducible expression of LTI65/RD29B (AC Q04980). Binds specifically to the ABA-responsive element (ABRE) of the LTI65/RD29B (AC Q04980) gene promoter. Binds to the promoter of FREE1 and activates its transcription. The sequence is that of ABSCISIC ACID-INSENSITIVE 5-like protein 7 from Arabidopsis thaliana (Mouse-ear cress).